The chain runs to 115 residues: uncharacterized protein (115 aa).

A signal peptide spans 1–26 (MNFKKTVVSALSISALALSVSGVASA). In terms of domain architecture, BIG2 spans 36–114 (VKNISISPTH…AVFGKVYVTV (79 aa)).

This is an uncharacterized protein from Bacillus subtilis (strain 168).